A 236-amino-acid chain; its full sequence is 2,3,4,5-tetrahydropyridine-2,6-dicarboxylate N-acetyltransferase (236 aa).

Belongs to the transferase hexapeptide repeat family. DapH subfamily.

The enzyme catalyses (S)-2,3,4,5-tetrahydrodipicolinate + acetyl-CoA + H2O = L-2-acetamido-6-oxoheptanedioate + CoA. It participates in amino-acid biosynthesis; L-lysine biosynthesis via DAP pathway; LL-2,6-diaminopimelate from (S)-tetrahydrodipicolinate (acetylase route): step 1/3. Functionally, catalyzes the transfer of an acetyl group from acetyl-CoA to tetrahydrodipicolinate. The chain is 2,3,4,5-tetrahydropyridine-2,6-dicarboxylate N-acetyltransferase from Bacillus subtilis (strain 168).